The chain runs to 325 residues: N-acetyl-gamma-glutamyl-phosphate reductase (325 aa).

Cys-131 is an active-site residue.

The protein belongs to the NAGSA dehydrogenase family. Type 1 subfamily.

Its subcellular location is the cytoplasm. The enzyme catalyses N-acetyl-L-glutamate 5-semialdehyde + phosphate + NADP(+) = N-acetyl-L-glutamyl 5-phosphate + NADPH + H(+). Its pathway is amino-acid biosynthesis; L-arginine biosynthesis; N(2)-acetyl-L-ornithine from L-glutamate: step 3/4. Its function is as follows. Catalyzes the NADPH-dependent reduction of N-acetyl-5-glutamyl phosphate to yield N-acetyl-L-glutamate 5-semialdehyde. The sequence is that of N-acetyl-gamma-glutamyl-phosphate reductase from Methylobacterium sp. (strain 4-46).